A 216-amino-acid chain; its full sequence is Superoxide dismutase [Cu-Zn] 2, chloroplastic (216 aa).

The transit peptide at 1-62 directs the protein to the chloroplast; it reads MAATNTILAF…APSKALTVVS (62 aa). Cu cation is bound by residues His108, His110, and His125. A disulfide bridge links Cys119 with Cys208. Zn(2+)-binding residues include His125, His133, His142, and Asp145. His182 provides a ligand contact to Cu cation.

Belongs to the Cu-Zn superoxide dismutase family. Homotetramer. Cu cation is required as a cofactor. It depends on Zn(2+) as a cofactor. In terms of tissue distribution, expressed in leaves (at protein level). The spatial localization is regulated by miR398-mediated silencing. Mostly present in flowers, old rosette leaves and inflorescence, and, to a lower extent, in cauline leaves, stems and roots.

The protein localises to the plastid. Its subcellular location is the chloroplast. It catalyses the reaction 2 superoxide + 2 H(+) = H2O2 + O2. Its function is as follows. Destroys radicals which are normally produced within the cells and which are toxic to biological systems. Mediates tolerance to stress, including photo-oxidative stress. In Arabidopsis thaliana (Mouse-ear cress), this protein is Superoxide dismutase [Cu-Zn] 2, chloroplastic (CSD2).